The primary structure comprises 62 residues: Kurtoxin-like I (62 aa).

An LCN-type CS-alpha/beta domain is found at 2-62 (IDGYPVDNWN…ARIKRGGRCN (61 aa)). Disulfide bonds link Cys12–Cys61, Cys16–Cys37, Cys23–Cys44, and Cys27–Cys46.

As to expression, expressed by the venom gland.

Its subcellular location is the secreted. Its function is as follows. This neurotoxin acts on sodium and calcium channels. Potently inhibits native voltage-gated T-type calcium channel activity in mouse male germ cells and weakly blocks Cav3.3/CACNA1I channels expressed in Xenopus oocytes. In addition, significantly slows the inactivation of activated recombinant sodium channels (Nav1.5/SCN5A). The sequence is that of Kurtoxin-like I from Parabuthus granulatus (Granulated thick-tailed scorpion).